The chain runs to 757 residues: RNA-directed RNA polymerase catalytic subunit (757 aa).

The tract at residues 50–82 is disordered; it reads SEKGKWTTNTETGAPQLNPIDGPLPEDNEPSGY. Residues 55–64 are compositionally biased toward polar residues; sequence WTTNTETGAP. 2 short sequence motifs (nuclear localization signal) span residues 187–195 and 203–216; these read RKRRVRDNM and RTIGKKKQRLNKKS. The promoter-binding site stretch occupies residues 249–256; the sequence is RGFVYFVE. Positions 286-483 constitute a RdRp catalytic domain; it reads VRKMMTNSQD…GINMSKKKSY (198 aa).

This sequence belongs to the influenza viruses polymerase PB1 family. As to quaternary structure, influenza RNA polymerase is composed of three subunits: PB1, PB2 and PA. Interacts (via N-terminus) with PA (via C-terminus). Interacts (via C-terminus) with PB2 (via N-terminus); this interaction is essential for transcription initiation. Phosphorylated by host PRKCA.

The protein resides in the host nucleus. Its subcellular location is the host cytoplasm. The enzyme catalyses RNA(n) + a ribonucleoside 5'-triphosphate = RNA(n+1) + diphosphate. Functionally, RNA-dependent RNA polymerase which is responsible for replication and transcription of virus RNA segments. The transcription of viral mRNAs occurs by a unique mechanism called cap-snatching. 5' methylated caps of cellular mRNAs are cleaved after 10-13 nucleotides by PA. In turn, these short capped RNAs are used as primers by PB1 for transcription of viral mRNAs. During virus replication, PB1 initiates RNA synthesis and copy vRNA into complementary RNA (cRNA) which in turn serves as a template for the production of more vRNAs. The chain is RNA-directed RNA polymerase catalytic subunit from Influenza A virus (strain A/Grey teal/Australia/2/1979 H4N4).